The primary structure comprises 653 residues: Zinc finger CCCH domain-containing protein 54 (653 aa).

A disordered region spans residues 242-261 (NGGGGGGGSPARARRSNGLS). The segment at 260 to 287 (LSTRRPCHYFSKGICKNGQNCHYSHHQV) adopts a C3H1-type zinc-finger fold. The 84-residue stretch at 313–396 (SLETLEMEIT…GQHSVVLAED (84 aa)) folds into the HTH OST-type domain. The RRM domain maps to 422-497 (HQIYLTFPAE…SRVLVKPYRE (76 aa)). The stretch at 537 to 565 (RLMRKQLAEKREMLLEMERRRATVRRLES) forms a coiled coil. The segment at 598–623 (PSLASPDPLEIVSNSQAPPTQAGNIY) is disordered. Positions 609-620 (VSNSQAPPTQAG) are enriched in polar residues.

The protein is Zinc finger CCCH domain-containing protein 54 of Oryza sativa subsp. japonica (Rice).